The following is a 93-amino-acid chain: Protein VNG_0358C (93 aa).

The chain is Protein VNG_0358C from Halobacterium salinarum (strain ATCC 700922 / JCM 11081 / NRC-1) (Halobacterium halobium).